The sequence spans 310 residues: Beta-ketoacyl-[acyl-carrier-protein] synthase III 1 (310 aa).

Catalysis depends on residues C112 and H235. Residues 236–240 are ACP-binding; sequence QANIR. Residue N265 is part of the active site.

The protein belongs to the thiolase-like superfamily. FabH family. Homodimer.

The protein resides in the cytoplasm. The catalysed reaction is malonyl-[ACP] + acetyl-CoA + H(+) = 3-oxobutanoyl-[ACP] + CO2 + CoA. Its pathway is lipid metabolism; fatty acid biosynthesis. Its function is as follows. Catalyzes the condensation reaction of fatty acid synthesis by the addition to an acyl acceptor of two carbons from malonyl-ACP. Catalyzes the first condensation reaction which initiates fatty acid synthesis and may therefore play a role in governing the total rate of fatty acid production. Possesses both acetoacetyl-ACP synthase and acetyl transacylase activities. Its substrate specificity determines the biosynthesis of branched-chain and/or straight-chain of fatty acids. The sequence is that of Beta-ketoacyl-[acyl-carrier-protein] synthase III 1 from Bacillus anthracis.